Here is a 438-residue protein sequence, read N- to C-terminus: Adenosylhomocysteinase (438 aa).

Substrate-binding residues include Thr61, Asp137, and Glu162. 163 to 165 contacts NAD(+); sequence TTT. Substrate-binding residues include Lys192 and Asp196. Residues Asn197, 226-231, Glu249, Asn284, 305-307, and Asn352 each bind NAD(+); these read GYGDVG and IGH.

The protein belongs to the adenosylhomocysteinase family. NAD(+) is required as a cofactor.

Its subcellular location is the cytoplasm. The enzyme catalyses S-adenosyl-L-homocysteine + H2O = L-homocysteine + adenosine. Its pathway is amino-acid biosynthesis; L-homocysteine biosynthesis; L-homocysteine from S-adenosyl-L-homocysteine: step 1/1. In terms of biological role, may play a key role in the regulation of the intracellular concentration of adenosylhomocysteine. This chain is Adenosylhomocysteinase, found in Flavobacterium johnsoniae (strain ATCC 17061 / DSM 2064 / JCM 8514 / BCRC 14874 / CCUG 350202 / NBRC 14942 / NCIMB 11054 / UW101) (Cytophaga johnsonae).